The following is a 421-amino-acid chain: Homoserine dehydrogenase (421 aa).

The NAD(+) site is built by Val15, Ala34, and Val44. Val15 is an NADP(+) binding site. Position 15 (Val15) interacts with NADPH. Residues Arg46 and Lys103 each coordinate NADP(+). 2 residues coordinate NADPH: Arg46 and Lys103. 4 residues coordinate Na(+): Glu125, Val128, Gly130, and Ile132. NADP(+) is bound by residues Gly183 and Glu186. L-homoserine-binding residues include Glu186 and Asp197. The active-site Proton donor is the Lys201. NAD(+) is bound at residue Gly298. Gly298 contacts NADP(+). Gly298 contacts NADPH. The ACT domain maps to 343–418; that stretch reads YARLLVSDEK…SVLDTPKMIR (76 aa).

The protein belongs to the homoserine dehydrogenase family. A metal cation serves as cofactor.

It catalyses the reaction L-homoserine + NADP(+) = L-aspartate 4-semialdehyde + NADPH + H(+). It carries out the reaction L-homoserine + NAD(+) = L-aspartate 4-semialdehyde + NADH + H(+). It functions in the pathway amino-acid biosynthesis; L-methionine biosynthesis via de novo pathway; L-homoserine from L-aspartate: step 3/3. Its pathway is amino-acid biosynthesis; L-threonine biosynthesis; L-threonine from L-aspartate: step 3/5. Its function is as follows. Catalyzes the conversion of L-aspartate-beta-semialdehyde (L-Asa) to L-homoserine (L-Hse), the third step in the biosynthesis of threonine and methionine from aspartate. This Helicobacter pylori (strain ATCC 700392 / 26695) (Campylobacter pylori) protein is Homoserine dehydrogenase (hom).